Reading from the N-terminus, the 126-residue chain is Holo-[acyl-carrier-protein] synthase (126 aa).

2 residues coordinate Mg(2+): Asp-9 and Glu-58.

Belongs to the P-Pant transferase superfamily. AcpS family. Mg(2+) is required as a cofactor.

The protein resides in the cytoplasm. The enzyme catalyses apo-[ACP] + CoA = holo-[ACP] + adenosine 3',5'-bisphosphate + H(+). Its function is as follows. Transfers the 4'-phosphopantetheine moiety from coenzyme A to a Ser of acyl-carrier-protein. The sequence is that of Holo-[acyl-carrier-protein] synthase from Sodalis glossinidius (strain morsitans).